The following is a 399-amino-acid chain: Octopine dehydrogenase (399 aa).

Residues 10–13 (GGNG) and 35–38 (FADE) contribute to the NADH site. Positions 118 and 143 each coordinate pyruvate. Residue glutamine 118 participates in substrate binding. Cysteine 148 is an NAD(+) binding site. Methionine 206 serves as a coordination point for L-arginine. Histidine 212 contacts pyruvate. The active site involves histidine 212. Arginine 324 provides a ligand contact to NAD(+).

It belongs to the lysopine/nopaline/octopine/opine/vitopine dehydrogenases family.

The catalysed reaction is D-octopine + NAD(+) + H2O = L-arginine + pyruvate + NADH + H(+). With respect to regulation, agmatine acts as a competitive inhibitor of the condensation reaction where the L-arginine and agmatine substrates compete for the same site. In terms of biological role, catalyzes the reverse reaction of octopine dehydrogenation. Acts on L-arginine in preference to other substrates such as canavanine, cysteine, L-alanine, ornithine or norvaline, owing to the presence of the positively charged guanidium group. In Pecten maximus (King scallop), this protein is Octopine dehydrogenase.